The sequence spans 2496 residues: Hornerin (2496 aa).

The S-100-like stretch occupies residues 1 to 81 (MPKLLESIVT…TEYLLMILKL (81 aa)). EF-hand domains lie at 13-48 (DVFYQYATEYGNCDMLSKEEMKELLVTEFHQILKNP) and 49-84 (DDPDTVDIIMQNLDRDHNHKVDFTEYLLMILKLTKA). Ca(2+) contacts are provided by Met27, Glu32, Asp62, Asp64, Asn66, Lys68, and Glu73. The s (spacer) stretch occupies residues 82–98 (TKACNKIIGKDYCQASG). Positions 97–2496 (SGSKQKNHSH…SGQTSGCGSG (2400 aa)) are disordered. One copy of the 1; truncated repeat lies at 99–145 (SKQKNHSHQHQEEQSKKETENKEQKGSISSSAGENDSYSRGSRGSNK). A compositionally biased stretch (basic and acidic residues) spans 107–123 (QHQEEQSKKETENKEQK). A compositionally biased stretch (polar residues) spans 124 to 134 (GSISSSAGEND). Over residues 144 to 153 (NKSKSKKLRK) the composition is skewed to basic residues. 27 consecutive repeat copies span residues 146 to 231 (SKSK…NGKH), 232 to 321 (GSSS…FGSS), 326 to 400 (SGQS…SEQY), 401 to 491 (GASS…SCCG), 492 to 577 (QSSG…SGRY), 578 to 668 (GASS…SGSR), 669 to 748 (HGSG…SGRC), 749 to 839 (GASS…SCCG), 840 to 926 (QSSG…SGRY), 927 to 1017 (GASS…SGSR), 1018 to 1097 (HGSG…SGRC), 1098 to 1188 (GASS…SCCG), 1189 to 1274 (QSSG…SGRY), 1275 to 1365 (GASS…SGSR), 1366 to 1445 (HGSG…SGRC), 1446 to 1536 (GASS…SCCG), 1537 to 1622 (QSSG…SGRY), 1623 to 1713 (GASS…SGSR), 1714 to 1793 (HGSG…SGRC), 1794 to 1884 (GASS…SCCG), 1885 to 1970 (QSSG…SGRY), 1971 to 2061 (GASS…SGSR), 2062 to 2141 (HGSG…SGRC), 2142 to 2232 (GASS…SGSR), 2233 to 2312 (HGSG…SGRY), 2313 to 2403 (GASS…SGSR), and 2410 to 2496 (QFPI…CGSG). Low complexity-rich tracts occupy residues 183 to 194 (SGFSNSSGNGRP), 200 to 246 (SGFP…SGHS), and 270 to 286 (RESSGSQEYSSGSSEEP). Composition is skewed to polar residues over residues 294–319 (RKNSSTCGKNGSYSGQSTGRHQQGFG) and 326–355 (SGQSITSANHGSHSNQSSCSGTRECGSSES). 3 stretches are compositionally biased toward low complexity: residues 362–379 (VSGSGHSSSTGKYTSTSG), 394–415 (SSGSEQYGASSGQSSGCSSGQS), and 423–448 (SGSRNSSTQSRGRSTSRESSTSQQFG). Residues 449 to 464 (SGSGRSSGFSQGGSGQ) are compositionally biased toward gly residues. Residues 465 to 565 (GRSSRGGQQG…GQTSSSTRQG (101 aa)) show a composition bias toward low complexity. Residues Ser506 and Ser508 each carry the phosphoserine modification. Gly residues predominate over residues 566-576 (SGQGQASGSGR). Low complexity-rich tracts occupy residues 577 to 593 (YGASSGQTSGCGSGQST) and 600 to 625 (SGSRNSSTQSRGRSTSRESSTSQRYG). Residues 626-641 (SGSGESSGFSQGGSGQ) show a composition bias toward gly residues. Low complexity-rich tracts occupy residues 642 to 670 (GRSSRGGQQGSFSGQTSGRSQHQSGSRHG) and 679 to 713 (SGQQGSHHGHSSSSGTHNSGSSQSSSTQWSHGSGS). Arg646 is subject to Omega-N-methylarginine. Phosphoserine is present on Ser716. Positions 723–736 (GSTSGQTASSTRQG) are enriched in low complexity. A compositionally biased stretch (gly residues) spans 737 to 747 (SGQGQASGSGR). Composition is skewed to low complexity over residues 748–764 (CGASSGQTSGCGSGQST), 771–796 (SGSRNSSTQSRGRSTSRESSTSQRFG), 804–884 (GFSQ…SRPA), and 891–914 (SGRSSGLGQYGSPSGQTSSSTRQG). Residue Ser815 is modified to Phosphoserine. The segment covering 915 to 925 (SGQGQASGSGR) has biased composition (gly residues). 2 stretches are compositionally biased toward low complexity: residues 926–942 (YGASSGQTSGCGSGQST) and 949–974 (SGSRNSSTQSRGRSTSRESSTSQRYG). Positions 975-990 (SGSGESSGFSQGGSGQ) are enriched in gly residues. 3 stretches are compositionally biased toward low complexity: residues 991–1019 (GRSSRGGQQGSFSGQTSGRSQHQSGSRHG), 1028–1062 (SGQQGSHHGHSSSSGTHNSGSSQSSSTQWSHGSGS), and 1072–1085 (GSTSGQTASSTRQG). Arg995 bears the Omega-N-methylarginine mark. Residues 1086 to 1096 (SGQGQASGSGR) show a composition bias toward gly residues. 3 stretches are compositionally biased toward low complexity: residues 1097–1113 (CGASSGQTSGCGSGQST), 1120–1145 (SGSRNSSTQSRGRSTSRESSTSQRFG), and 1153–1262 (GFSQ…TRQG). Ser1229 bears the Phosphoserine mark. The segment covering 1263–1273 (SGQGQASGSGR) has biased composition (gly residues). A compositionally biased stretch (polar residues) spans 1281-1292 (TSGCRSGQSTRY). A compositionally biased stretch (low complexity) spans 1298 to 1322 (GSRNSSTQSRGRSTSRESSTSQRYG). Positions 1323 to 1338 (SGSGESSGFSQGGSGQ) are enriched in gly residues. Low complexity-rich tracts occupy residues 1339–1367 (GRSSRGGQQGSFSGQTSGRNQHQSGSRHG), 1376–1410 (SGQQGSHHGHSSSSGTHNSGSSQSSSTQWSHGSGS), and 1420–1433 (GSTSGQTASSTRQG). Arg1343 is subject to Omega-N-methylarginine. Gly residues predominate over residues 1434 to 1444 (SGQGQASGSGR). Composition is skewed to low complexity over residues 1445–1461 (CGASSGQTSGCGSGQST), 1468–1493 (SGSRNSSTQSRGRSTSRESSTSQRFG), and 1501–1610 (GFSQ…TRQG). Phosphoserine is present on residues Ser1551 and Ser1553. Positions 1611 to 1621 (SGQGQASGSGR) are enriched in gly residues. Low complexity-rich tracts occupy residues 1622 to 1631 (YGASSGQTSG) and 1645 to 1670 (SGSRNSSTQSRGRSTSRESSTSQRCG). Ser1650 carries the post-translational modification Phosphoserine. Gly residues predominate over residues 1671-1686 (SGSGESSGFSQGGSGQ). Composition is skewed to low complexity over residues 1687-1715 (GRSSRGGQQGSFSGQTSGRSQHQSGSRHG), 1724-1758 (SGQQGSHHGHSSSSGTHNSGSSQSSSTQWSHGSGS), and 1768-1781 (GSTSGQTASSTRQG). Arg1691 carries the omega-N-methylarginine modification. The span at 1782 to 1792 (SGQGQASGSGR) shows a compositional bias: gly residues. Residues 1800–1811 (TSGCGSDQSTRY) are compositionally biased toward polar residues. Composition is skewed to low complexity over residues 1816–1841 (SGSRNSSTQSRGRSTSRESSTSQRFG) and 1849–1958 (GFSQ…TRQG). The segment covering 1959 to 1969 (SGQGQASGSGR) has biased composition (gly residues). 2 stretches are compositionally biased toward low complexity: residues 1970–1986 (YGASSGQTSGCGSGQST) and 1993–2018 (SGSRNSSTQSRGRSTSRESSTSQRYG). A Phosphoserine modification is found at Ser2011. A compositionally biased stretch (gly residues) spans 2019–2034 (SGSGESSGFSQGGSGQ). Composition is skewed to low complexity over residues 2035-2063 (GRSSRGGQQGSFSGQTSGRSQHQSGSRHG) and 2072-2106 (SGQQGSHHGHSSSSGTHNSGSSQSSSTQWSHGSGS). An Omega-N-methylarginine modification is found at Arg2039. Phosphoserine is present on residues Ser2109 and Ser2124. Over residues 2116-2129 (GSTSGQTASSTRQG) the composition is skewed to low complexity. Over residues 2130 to 2140 (SGQGQASGSGR) the composition is skewed to gly residues. 2 stretches are compositionally biased toward low complexity: residues 2141–2157 (CGASSGQTSGCGSGQST) and 2164–2189 (SGSRNSSTQSRGRSTSRESSTSQRYG). Residues 2190 to 2205 (SGSGESSGFSQGGSGQ) show a composition bias toward gly residues. Low complexity-rich tracts occupy residues 2206-2234 (GRSSRGGQQGSFSGQTSGRSQHQSGSRHG) and 2243-2300 (SGQQ…TRQG). The residue at position 2210 (Arg2210) is an Omega-N-methylarginine. Positions 2301–2311 (SGQGQASGSGR) are enriched in gly residues. Low complexity-rich tracts occupy residues 2312-2328 (YGASSGQTSGCGSGQST) and 2335-2360 (SGSRNSSTQSRGRSTSRESSTSQRYG). Ser2353 is subject to Phosphoserine. Positions 2361–2376 (SGSGESSGFSQGGSGQ) are enriched in gly residues. 3 stretches are compositionally biased toward low complexity: residues 2377 to 2405 (GRSSRGGQQGSFSGQTSGRSQHQSGSRHG), 2414 to 2448 (SGQQGSHHGHSSSSGTHNSGSSQSSSTQWSHGSGS), and 2458 to 2471 (GSTSGQTASSTRQG). Arg2381 carries the omega-N-methylarginine modification. Positions 2472 to 2482 (SGQGQASGSGR) are enriched in gly residues.

The protein belongs to the S100-fused protein family. This sequence in the N-terminal section; belongs to the S-100 family. Post-translationally, processed during the process of epidermal differentiation. Forms covalent cross-links mediated by transglutaminase TGM3, between glutamine and the epsilon-amino group of lysine residues (in vitro). As to expression, embryonic skin. Highest level in the adult forestomach followed by the skin. Lower levels in the tongue, esophagus. Detected in the granular and cornified layers of the mature epidermis.

It localises to the cytoplasmic granule. Its function is as follows. Component of the epidermal cornified cell envelopes. The polypeptide is Hornerin (Hrnr) (Mus musculus (Mouse)).